The chain runs to 196 residues: ATP-dependent Clp protease proteolytic subunit (196 aa).

The Nucleophile role is filled by Ser101. His126 is a catalytic residue.

The protein belongs to the peptidase S14 family. In terms of assembly, component of the chloroplastic Clp protease core complex.

It localises to the plastid. Its subcellular location is the chloroplast stroma. The enzyme catalyses Hydrolysis of proteins to small peptides in the presence of ATP and magnesium. alpha-casein is the usual test substrate. In the absence of ATP, only oligopeptides shorter than five residues are hydrolyzed (such as succinyl-Leu-Tyr-|-NHMec, and Leu-Tyr-Leu-|-Tyr-Trp, in which cleavage of the -Tyr-|-Leu- and -Tyr-|-Trp bonds also occurs).. In terms of biological role, cleaves peptides in various proteins in a process that requires ATP hydrolysis. Has a chymotrypsin-like activity. Plays a major role in the degradation of misfolded proteins. The sequence is that of ATP-dependent Clp protease proteolytic subunit from Lotus japonicus (Lotus corniculatus var. japonicus).